Here is a 144-residue protein sequence, read N- to C-terminus: MSNAYEEYMRQMVIPMRQELVRSGFEELTTEEAVTEFMENTSGTTLVVVNSVCGCAAGLARPSAGQAVVRAEKQPDHLVTVFAGQDKDATAKMREYFGEIPPSSPSMALLKGKEVVHFIHRHEIEGATMDEIITNLEQAFEKNC.

Belongs to the bacilliredoxin family.

The polypeptide is Bacilliredoxin BC_2157 (Bacillus cereus (strain ATCC 14579 / DSM 31 / CCUG 7414 / JCM 2152 / NBRC 15305 / NCIMB 9373 / NCTC 2599 / NRRL B-3711)).